The chain runs to 267 residues: Phosphate import ATP-binding protein PstB (267 aa).

The region spanning 21 to 262 (VAARNLDFYY…PSKQQTEDYI (242 aa)) is the ABC transporter domain. 53–60 (GPSGCGKS) provides a ligand contact to ATP.

This sequence belongs to the ABC transporter superfamily. Phosphate importer (TC 3.A.1.7) family. As to quaternary structure, the complex is composed of two ATP-binding proteins (PstB), two transmembrane proteins (PstC and PstA) and a solute-binding protein (PstS).

The protein localises to the cell inner membrane. The enzyme catalyses phosphate(out) + ATP + H2O = ADP + 2 phosphate(in) + H(+). In terms of biological role, part of the ABC transporter complex PstSACB involved in phosphate import. Responsible for energy coupling to the transport system. The sequence is that of Phosphate import ATP-binding protein PstB from Xanthomonas campestris pv. campestris (strain 8004).